The primary structure comprises 318 residues: NAD kinase (318 aa).

The active-site Proton acceptor is Asp-84. Residues 84–85 (DG), Arg-89, 159–160 (NE), Arg-170, Asp-189, and 200–205 (TAYAFS) each bind NAD(+).

The protein belongs to the NAD kinase family. It depends on a divalent metal cation as a cofactor.

The protein resides in the cytoplasm. It catalyses the reaction NAD(+) + ATP = ADP + NADP(+) + H(+). In terms of biological role, involved in the regulation of the intracellular balance of NAD and NADP, and is a key enzyme in the biosynthesis of NADP. Catalyzes specifically the phosphorylation on 2'-hydroxyl of the adenosine moiety of NAD to yield NADP. The chain is NAD kinase from Cutibacterium acnes (strain DSM 16379 / KPA171202) (Propionibacterium acnes).